Reading from the N-terminus, the 683-residue chain is uncharacterized protein (683 aa).

Coiled-coil stretches lie at residues 62 to 124 (PEHY…RKER), 155 to 259 (TTTN…KLSQ), and 346 to 376 (KKSL…DGDV). Residues 213 to 237 (QDQVESQTGPKKRRKSPIENQPTAG) form a disordered region.

This is an uncharacterized protein from Invertebrate iridescent virus 3 (IIV-3).